Consider the following 159-residue polypeptide: Serine-protein kinase RsbW (159 aa).

It belongs to the anti-sigma-factor family.

The catalysed reaction is L-seryl-[protein] + ATP = O-phospho-L-seryl-[protein] + ADP + H(+). It carries out the reaction L-threonyl-[protein] + ATP = O-phospho-L-threonyl-[protein] + ADP + H(+). Negative regulator of sigma-B activity. Phosphorylates and inactivates its specific antagonist protein, RsbV. Upon phosphorylation of RsbV, RsbW is released and binds to sigma-B, thereby blocking its ability to form an RNA polymerase holoenzyme (E-sigma-B). This is Serine-protein kinase RsbW from Staphylococcus aureus (strain MSSA476).